Consider the following 559-residue polypeptide: Protochlorophyllide-dependent translocon component 52, chloroplastic (559 aa).

The transit peptide at 1–55 directs the protein to the chloroplast; sequence MEAALAACALPSLRILNTKPRFRCSFSNPSLPISPNSLITRKSSRFTTAVSSPPS. Residues 44-70 form a disordered region; it reads SRFTTAVSSPPSSSAATSTNSPPEPEA. Residues 47-64 are compositionally biased toward low complexity; it reads TTAVSSPPSSSAATSTNS. The 111-residue stretch at 85-195 folds into the Rieske domain; that stretch reads WYPVMPICDL…STVQHEIIWF (111 aa). 4 residues coordinate [2Fe-2S] cluster: cysteine 127, histidine 129, cysteine 147, and histidine 150. Residues histidine 248 and histidine 253 each coordinate Fe cation. Positions 483–486 match the Redox-active motif motif; that stretch reads CSSC. Helical transmembrane passes span 493 to 513 and 525 to 545; these read LNALEVILQIASVAMIGVMAV and IAVLVAAVLSFAASKWLSHFI.

It depends on [2Fe-2S] cluster as a cofactor.

Its subcellular location is the plastid. It is found in the chloroplast inner membrane. The enzyme catalyses protochlorophyllide a + 4 reduced [2Fe-2S]-[ferredoxin] + 2 O2 + 5 H(+) = protochlorophyllide b + 4 oxidized [2Fe-2S]-[ferredoxin] + 3 H2O. With respect to regulation, down-regulated by light. Functionally, part of a translocon most abundantly expressed in etiolated plants and involved in the protochlorophyllide-dependent import of the precursor NADPH:protochlorophyllide oxidoreductase A (pPORA). The polypeptide is Protochlorophyllide-dependent translocon component 52, chloroplastic (Arabidopsis thaliana (Mouse-ear cress)).